We begin with the raw amino-acid sequence, 103 residues long: NADH-quinone oxidoreductase subunit K (103 aa).

3 helical membrane passes run Val-5–Val-25, Ile-32–Phe-52, and Phe-66–Ile-86.

This sequence belongs to the complex I subunit 4L family. As to quaternary structure, NDH-1 is composed of 15 different subunits. Subunits NuoA, H, J, K, L, M, N constitute the membrane sector of the complex.

It is found in the cell membrane. It catalyses the reaction a quinone + NADH + 5 H(+)(in) = a quinol + NAD(+) + 4 H(+)(out). Functionally, NDH-1 shuttles electrons from NADH, via FMN and iron-sulfur (Fe-S) centers, to quinones in the respiratory chain. The immediate electron acceptor for the enzyme in this species is believed to be a menaquinone. Couples the redox reaction to proton translocation (for every two electrons transferred, four hydrogen ions are translocated across the cytoplasmic membrane), and thus conserves the redox energy in a proton gradient. This is NADH-quinone oxidoreductase subunit K from Deinococcus radiodurans (strain ATCC 13939 / DSM 20539 / JCM 16871 / CCUG 27074 / LMG 4051 / NBRC 15346 / NCIMB 9279 / VKM B-1422 / R1).